The following is a 154-amino-acid chain: Probable cyclic pyranopterin monophosphate synthase (154 aa).

Residues 74–76 (LCH) and 110–111 (ME) contribute to the substrate site. The active site involves Asp125.

The protein belongs to the MoaC family. Homohexamer; trimer of dimers.

The catalysed reaction is (8S)-3',8-cyclo-7,8-dihydroguanosine 5'-triphosphate = cyclic pyranopterin phosphate + diphosphate. It functions in the pathway cofactor biosynthesis; molybdopterin biosynthesis. Functionally, catalyzes the conversion of (8S)-3',8-cyclo-7,8-dihydroguanosine 5'-triphosphate to cyclic pyranopterin monophosphate (cPMP). This is Probable cyclic pyranopterin monophosphate synthase from Methanosphaerula palustris (strain ATCC BAA-1556 / DSM 19958 / E1-9c).